The chain runs to 397 residues: 1-deoxy-D-xylulose 5-phosphate reductoisomerase (397 aa).

Positions 12, 13, 14, 15, 38, 39, 40, and 126 each coordinate NADPH. Lysine 127 contributes to the 1-deoxy-D-xylulose 5-phosphate binding site. Glutamate 128 is a binding site for NADPH. Aspartate 152 is a Mn(2+) binding site. 1-deoxy-D-xylulose 5-phosphate contacts are provided by serine 153, glutamate 154, serine 188, and histidine 211. Glutamate 154 is a binding site for Mn(2+). An NADPH-binding site is contributed by glycine 217. 4 residues coordinate 1-deoxy-D-xylulose 5-phosphate: serine 224, asparagine 229, lysine 230, and glutamate 233. Position 233 (glutamate 233) interacts with Mn(2+).

The protein belongs to the DXR family. Requires Mg(2+) as cofactor. Mn(2+) serves as cofactor.

It catalyses the reaction 2-C-methyl-D-erythritol 4-phosphate + NADP(+) = 1-deoxy-D-xylulose 5-phosphate + NADPH + H(+). Its pathway is isoprenoid biosynthesis; isopentenyl diphosphate biosynthesis via DXP pathway; isopentenyl diphosphate from 1-deoxy-D-xylulose 5-phosphate: step 1/6. Catalyzes the NADPH-dependent rearrangement and reduction of 1-deoxy-D-xylulose-5-phosphate (DXP) to 2-C-methyl-D-erythritol 4-phosphate (MEP). The polypeptide is 1-deoxy-D-xylulose 5-phosphate reductoisomerase (Haemophilus influenzae (strain PittEE)).